The primary structure comprises 257 residues: Pyrroline-5-carboxylate reductase (257 aa).

Belongs to the pyrroline-5-carboxylate reductase family.

It localises to the cytoplasm. It catalyses the reaction L-proline + NADP(+) = (S)-1-pyrroline-5-carboxylate + NADPH + 2 H(+). It carries out the reaction L-proline + NAD(+) = (S)-1-pyrroline-5-carboxylate + NADH + 2 H(+). Its pathway is amino-acid biosynthesis; L-proline biosynthesis; L-proline from L-glutamate 5-semialdehyde: step 1/1. In terms of biological role, catalyzes the reduction of 1-pyrroline-5-carboxylate (PCA) to L-proline. This chain is Pyrroline-5-carboxylate reductase, found in Helicobacter pylori (strain J99 / ATCC 700824) (Campylobacter pylori J99).